The chain runs to 261 residues: Cytochrome c oxidase subunit 3 (261 aa).

The Mitochondrial matrix segment spans residues Met1 to Pro15. The chain crosses the membrane as a helical span at residues Trp16–Trp34. Residues Phe35–Thr40 are Mitochondrial intermembrane-facing. Residues Ile41–Thr66 traverse the membrane as a helical segment. Residues Phe67 to Thr72 are Mitochondrial matrix-facing. A helical membrane pass occupies residues Pro73–Ser105. Residues Leu106–Glu128 are Mitochondrial intermembrane-facing. The helical transmembrane segment at Val129–Met152 threads the bilayer. Over Glu153–Asn155 the chain is Mitochondrial matrix. A helical membrane pass occupies residues Arg156–Glu183. Over Ala184–Asp190 the chain is Mitochondrial intermembrane. The chain crosses the membrane as a helical span at residues Gly191 to Leu223. The Mitochondrial matrix segment spans residues Lys224–His232. Residues Phe233–Ile256 traverse the membrane as a helical segment. The Mitochondrial intermembrane segment spans residues Tyr257–Ser261.

This sequence belongs to the cytochrome c oxidase subunit 3 family. Component of the cytochrome c oxidase (complex IV, CIV), a multisubunit enzyme composed of 14 subunits. The complex is composed of a catalytic core of 3 subunits MT-CO1, MT-CO2 and MT-CO3, encoded in the mitochondrial DNA, and 11 supernumerary subunits COX4I, COX5A, COX5B, COX6A, COX6B, COX6C, COX7A, COX7B, COX7C, COX8 and NDUFA4, which are encoded in the nuclear genome. The complex exists as a monomer or a dimer and forms supercomplexes (SCs) in the inner mitochondrial membrane with NADH-ubiquinone oxidoreductase (complex I, CI) and ubiquinol-cytochrome c oxidoreductase (cytochrome b-c1 complex, complex III, CIII), resulting in different assemblies (supercomplex SCI(1)III(2)IV(1) and megacomplex MCI(2)III(2)IV(2)).

The protein resides in the mitochondrion inner membrane. It catalyses the reaction 4 Fe(II)-[cytochrome c] + O2 + 8 H(+)(in) = 4 Fe(III)-[cytochrome c] + 2 H2O + 4 H(+)(out). In terms of biological role, component of the cytochrome c oxidase, the last enzyme in the mitochondrial electron transport chain which drives oxidative phosphorylation. The respiratory chain contains 3 multisubunit complexes succinate dehydrogenase (complex II, CII), ubiquinol-cytochrome c oxidoreductase (cytochrome b-c1 complex, complex III, CIII) and cytochrome c oxidase (complex IV, CIV), that cooperate to transfer electrons derived from NADH and succinate to molecular oxygen, creating an electrochemical gradient over the inner membrane that drives transmembrane transport and the ATP synthase. Cytochrome c oxidase is the component of the respiratory chain that catalyzes the reduction of oxygen to water. Electrons originating from reduced cytochrome c in the intermembrane space (IMS) are transferred via the dinuclear copper A center (CU(A)) of subunit 2 and heme A of subunit 1 to the active site in subunit 1, a binuclear center (BNC) formed by heme A3 and copper B (CU(B)). The BNC reduces molecular oxygen to 2 water molecules using 4 electrons from cytochrome c in the IMS and 4 protons from the mitochondrial matrix. The protein is Cytochrome c oxidase subunit 3 (MT-CO3) of Dugong dugon (Dugong).